The primary structure comprises 569 residues: Urease subunit alpha (569 aa).

The region spanning Gly131–Phe569 is the Urease domain. Positions 136, 138, and 219 each coordinate Ni(2+). Lys219 is subject to N6-carboxylysine. A substrate-binding site is contributed by His221. 2 residues coordinate Ni(2+): His248 and His274. His322 serves as the catalytic Proton donor. A Ni(2+)-binding site is contributed by Asp362.

Belongs to the metallo-dependent hydrolases superfamily. Urease alpha subunit family. Heterotrimer of UreA (gamma), UreB (beta) and UreC (alpha) subunits. Three heterotrimers associate to form the active enzyme. The cofactor is Ni cation. Carboxylation allows a single lysine to coordinate two nickel ions.

It is found in the cytoplasm. The enzyme catalyses urea + 2 H2O + H(+) = hydrogencarbonate + 2 NH4(+). It participates in nitrogen metabolism; urea degradation; CO(2) and NH(3) from urea (urease route): step 1/1. The protein is Urease subunit alpha of Roseobacter denitrificans (strain ATCC 33942 / OCh 114) (Erythrobacter sp. (strain OCh 114)).